Consider the following 197-residue polypeptide: MTLDELIDKLAAKSRILITKVTVKDHLAYKIEPHFLLPFLKALKESEELRFTVLTDLFGVDFPKREKRFEIVYNLLSLKLNKNLIIKTNISEKESIPSAMKILSAACWYELEVYDMYGVNFNGNNDKRRILTDYDFEGHPLRKDFPLTGYTQVKYDKKLKKIAYEPVNLDIEYREFDFSSHWHSPSYILPGDEKAEK.

This sequence belongs to the complex I 30 kDa subunit family. NDH-1 is composed of 14 different subunits. Subunits NuoB, C, D, E, F, and G constitute the peripheral sector of the complex.

It is found in the cell inner membrane. It carries out the reaction a quinone + NADH + 5 H(+)(in) = a quinol + NAD(+) + 4 H(+)(out). In terms of biological role, NDH-1 shuttles electrons from NADH, via FMN and iron-sulfur (Fe-S) centers, to quinones in the respiratory chain. The immediate electron acceptor for the enzyme in this species is believed to be ubiquinone. Couples the redox reaction to proton translocation (for every two electrons transferred, four hydrogen ions are translocated across the cytoplasmic membrane), and thus conserves the redox energy in a proton gradient. This Rickettsia typhi (strain ATCC VR-144 / Wilmington) protein is NADH-quinone oxidoreductase subunit C.